The following is a 212-amino-acid chain: Probable GTP-binding protein EngB (212 aa).

Residues 38 to 210 (SLPEIAFVGK…KASLAKCIKP (173 aa)) form the EngB-type G domain. Residues 46-53 (GKSNVGKS), 73-77 (GRTRQ), 91-94 (DLPG), 158-161 (TKSD), and 189-191 (VSN) each bind GTP. 2 residues coordinate Mg(2+): serine 53 and threonine 75.

This sequence belongs to the TRAFAC class TrmE-Era-EngA-EngB-Septin-like GTPase superfamily. EngB GTPase family. Mg(2+) serves as cofactor.

Functionally, necessary for normal cell division and for the maintenance of normal septation. The protein is Probable GTP-binding protein EngB of Rickettsia africae (strain ESF-5).